The primary structure comprises 163 residues: Transcriptional repressor NrdR (163 aa).

The segment at 3-34 (CPFCRHDDSRVVDSRTTDDGSSIRRRRQCPNC) is a zinc-finger region. Positions 46-136 (LSVIKRSGAP…VYQAFDSLAD (91 aa)) constitute an ATP-cone domain.

It belongs to the NrdR family. Zn(2+) is required as a cofactor.

Functionally, negatively regulates transcription of bacterial ribonucleotide reductase nrd genes and operons by binding to NrdR-boxes. This chain is Transcriptional repressor NrdR, found in Kineococcus radiotolerans (strain ATCC BAA-149 / DSM 14245 / SRS30216).